We begin with the raw amino-acid sequence, 64 residues long: Large ribosomal subunit protein bL33 (64 aa).

Belongs to the bacterial ribosomal protein bL33 family.

The protein is Large ribosomal subunit protein bL33 of Gloeothece citriformis (strain PCC 7424) (Cyanothece sp. (strain PCC 7424)).